The sequence spans 212 residues: Large ribosomal subunit protein bL25 (212 aa).

The interval 190–212 (IAEAGDALAEPEVISKGSGEADE) is disordered.

This sequence belongs to the bacterial ribosomal protein bL25 family. CTC subfamily. As to quaternary structure, part of the 50S ribosomal subunit; part of the 5S rRNA/L5/L18/L25 subcomplex. Contacts the 5S rRNA. Binds to the 5S rRNA independently of L5 and L18.

In terms of biological role, this is one of the proteins that binds to the 5S RNA in the ribosome where it forms part of the central protuberance. In Rhodopirellula baltica (strain DSM 10527 / NCIMB 13988 / SH1), this protein is Large ribosomal subunit protein bL25.